A 416-amino-acid chain; its full sequence is Actin-like protein 9 (416 aa).

The interval 1-40 (MDASRPKSSESQSSLEAPRPGPNPSPNVVNKPLQRDSPGM) is disordered.

It belongs to the actin family. In terms of assembly, interacts with ACTL7A. In terms of tissue distribution, testis-specific.

It localises to the cytoplasmic vesicle. The protein resides in the secretory vesicle. The protein localises to the acrosome. Its subcellular location is the cytoplasm. It is found in the cytoskeleton. It localises to the perinuclear theca. Its function is as follows. Testis-specic protein that plays an important role in fusion of proacrosomal vesicles and perinuclear theca formation. This Homo sapiens (Human) protein is Actin-like protein 9.